The primary structure comprises 136 residues: Glutamyl-tRNA(Gln) amidotransferase subunit C, mitochondrial (136 aa).

A mitochondrion-targeting transit peptide spans 1-27; it reads MWARAVHLGLRAAARGRRGFTSKADPQ.

This sequence belongs to the GatC family. In terms of assembly, subunit of the heterotrimeric GatCAB amidotransferase (AdT) complex, composed of A (QRSL1), B (GATB) and C (GATC) subunits.

The protein resides in the mitochondrion. The catalysed reaction is L-glutamyl-tRNA(Gln) + L-glutamine + ATP + H2O = L-glutaminyl-tRNA(Gln) + L-glutamate + ADP + phosphate + H(+). Functionally, allows the formation of correctly charged Gln-tRNA(Gln) through the transamidation of misacylated Glu-tRNA(Gln) in the mitochondria. The reaction takes place in the presence of glutamine and ATP through an activated gamma-phospho-Glu-tRNA(Gln). The protein is Glutamyl-tRNA(Gln) amidotransferase subunit C, mitochondrial of Bos taurus (Bovine).